Consider the following 385-residue polypeptide: Protein-glutamate methylesterase/protein-glutamine glutaminase (385 aa).

A Response regulatory domain is found at 20 to 138 (RVMIVDDSVV…EASAADIFKH (119 aa)). At Asp-71 the chain carries 4-aspartylphosphate. Positions 189–383 (GVTAPRVLLI…PKLVRLFSGD (195 aa)) constitute a CheB-type methylesterase domain. Catalysis depends on residues Ser-201, His-229, and Asp-325.

The protein belongs to the CheB family. Post-translationally, phosphorylated by CheA. Phosphorylation of the N-terminal regulatory domain activates the methylesterase activity.

It localises to the cytoplasm. The enzyme catalyses [protein]-L-glutamate 5-O-methyl ester + H2O = L-glutamyl-[protein] + methanol + H(+). The catalysed reaction is L-glutaminyl-[protein] + H2O = L-glutamyl-[protein] + NH4(+). In terms of biological role, involved in chemotaxis. Part of a chemotaxis signal transduction system that modulates chemotaxis in response to various stimuli. Catalyzes the demethylation of specific methylglutamate residues introduced into the chemoreceptors (methyl-accepting chemotaxis proteins or MCP) by CheR. Also mediates the irreversible deamidation of specific glutamine residues to glutamic acid. This Rhodopseudomonas palustris (strain BisB5) protein is Protein-glutamate methylesterase/protein-glutamine glutaminase.